The sequence spans 314 residues: tRNA dimethylallyltransferase (314 aa).

13 to 20 (GPTAVGKT) provides a ligand contact to ATP. 15–20 (TAVGKT) is a substrate binding site. An interaction with substrate tRNA region spans residues 38–41 (DSMQ).

This sequence belongs to the IPP transferase family. Monomer. Mg(2+) serves as cofactor.

It catalyses the reaction adenosine(37) in tRNA + dimethylallyl diphosphate = N(6)-dimethylallyladenosine(37) in tRNA + diphosphate. Catalyzes the transfer of a dimethylallyl group onto the adenine at position 37 in tRNAs that read codons beginning with uridine, leading to the formation of N6-(dimethylallyl)adenosine (i(6)A). This chain is tRNA dimethylallyltransferase, found in Bacillus velezensis (strain DSM 23117 / BGSC 10A6 / LMG 26770 / FZB42) (Bacillus amyloliquefaciens subsp. plantarum).